Consider the following 313-residue polypeptide: Guanine nucleotide-binding protein-like 3-like protein (313 aa).

Residues 1–14 (MGIKKKRQSKRLTT) are compositionally biased toward basic residues. The interval 1–41 (MGIKKKRQSKRLTTRKREGMLKRARANERKKRRMDRKMQAK) is disordered. Positions 15–27 (RKREGMLKRARAN) are enriched in basic and acidic residues. Residues 95-98 (SKSD), 178-185 (GNPGSGKN), and 212-215 (TLSS) contribute to the GTP site.

It belongs to the MMR1/HSR1 GTP-binding protein family.

It localises to the nucleus. The protein localises to the nucleolus. Its function is as follows. Required for normal processing of ribosomal pre-rRNA. Required for cell proliferation. Binds GTP. This chain is Guanine nucleotide-binding protein-like 3-like protein, found in Encephalitozoon cuniculi (strain GB-M1) (Microsporidian parasite).